The chain runs to 317 residues: Protein CbxX, plasmid (317 aa).

85–92 (GNPGTGKT) is an ATP binding site.

This sequence belongs to the CbxX/CfxQ family.

Seems to be necessary for the expression of RuBisCO. The sequence is that of Protein CbxX, plasmid (cbxXP) from Cupriavidus necator (strain ATCC 17699 / DSM 428 / KCTC 22496 / NCIMB 10442 / H16 / Stanier 337) (Ralstonia eutropha).